The sequence spans 509 residues: Scavenger receptor class B member 1 (509 aa).

At Met1 to Ala11 the chain is on the cytoplasmic side. A helical transmembrane segment spans residues Leu12–Val32. Over Pro33–Val440 the chain is Extracellular. N-linked (GlcNAc...) asparagine glycans are attached at residues Asn102, Asn108, Asn116, Asn173, Asn212, Asn227, Asn255, Asn288, Asn310, Asn330, and Asn383. Cys251 and Cys384 are joined by a disulfide. The helical transmembrane segment at Leu441–Ile461 threads the bilayer. Cys462 is lipidated: S-palmitoyl cysteine. At Cys462–Leu509 the chain is on the cytoplasmic side.

The protein belongs to the CD36 family. In terms of assembly, the C-terminal region binds to PDZK1. Post-translationally, N-glycosylated. In terms of processing, the six cysteines of the extracellular domain are all involved in intramolecular disulfide bonds. In terms of tissue distribution, expressed primarily in liver, ovary and adrenal gland, and, at lower levels in other non-placental steroidogenic tissues, including adipose tissue, mammary gland and testis (at protein level). Isoform 2 is expressed at lower levels than isoform 1 in liver, testis and adrenal gland. At the mRNA, but not at the protein level, isoform 2 is the predominant isoform in testis (80%).

It is found in the cell membrane. Its subcellular location is the membrane. The protein localises to the caveola. Receptor for different ligands such as phospholipids, cholesterol ester, lipoproteins, phosphatidylserine and apoptotic cells. Both isoform 1 and isoform 2 act as receptors for HDL, mediating selective uptake of cholesteryl ether and HDL-dependent cholesterol efflux. Also facilitates the flux of free and esterified cholesterol between the cell surface and apoB-containing lipoproteins and modified lipoproteins, although less efficiently than HDL. May be involved in the phagocytosis of apoptotic cells, via its phosphatidylserine binding activity. The sequence is that of Scavenger receptor class B member 1 (Scarb1) from Mus musculus (Mouse).